We begin with the raw amino-acid sequence, 578 residues long: Potassium-transporting ATPase potassium-binding subunit (578 aa).

10 helical membrane passes run 3-23 (NAIL…IPLG), 65-85 (SFSV…LNLL), 134-154 (GLTV…FALI), 175-195 (IVLY…VSQG), 261-281 (FSNL…CFTF), 293-313 (AIFI…GVSE), 397-417 (GLYG…LMVG), 435-455 (AMLI…LASI), 503-523 (IGLI…AIAG), and 543-563 (LLFI…SFFP).

Belongs to the KdpA family. In terms of assembly, the system is composed of three essential subunits: KdpA, KdpB and KdpC.

Its subcellular location is the cell membrane. Functionally, part of the high-affinity ATP-driven potassium transport (or Kdp) system, which catalyzes the hydrolysis of ATP coupled with the electrogenic transport of potassium into the cytoplasm. This subunit binds the extracellular potassium ions and delivers the ions to the membrane domain of KdpB through an intramembrane tunnel. This Clostridium perfringens (strain ATCC 13124 / DSM 756 / JCM 1290 / NCIMB 6125 / NCTC 8237 / Type A) protein is Potassium-transporting ATPase potassium-binding subunit.